A 295-amino-acid chain; its full sequence is Ribosomal protein L11 methyltransferase (295 aa).

S-adenosyl-L-methionine-binding residues include Thr-145, Gly-166, Asp-188, and Asn-230.

The protein belongs to the methyltransferase superfamily. PrmA family.

It is found in the cytoplasm. The catalysed reaction is L-lysyl-[protein] + 3 S-adenosyl-L-methionine = N(6),N(6),N(6)-trimethyl-L-lysyl-[protein] + 3 S-adenosyl-L-homocysteine + 3 H(+). Methylates ribosomal protein L11. This chain is Ribosomal protein L11 methyltransferase, found in Haemophilus influenzae (strain PittEE).